We begin with the raw amino-acid sequence, 238 residues long: Orotidine 5'-phosphate decarboxylase (238 aa).

Substrate contacts are provided by residues D10, K32, 59 to 68, T122, R184, Q193, G213, and R214; that span reads DLKLHDIPNT. The active-site Proton donor is K61.

This sequence belongs to the OMP decarboxylase family. Type 1 subfamily. In terms of assembly, homodimer.

It carries out the reaction orotidine 5'-phosphate + H(+) = UMP + CO2. The protein operates within pyrimidine metabolism; UMP biosynthesis via de novo pathway; UMP from orotate: step 2/2. In terms of biological role, catalyzes the decarboxylation of orotidine 5'-monophosphate (OMP) to uridine 5'-monophosphate (UMP). The polypeptide is Orotidine 5'-phosphate decarboxylase (Bacillus cereus (strain G9842)).